The primary structure comprises 420 residues: UDP-N-acetyl-D-mannosamine dehydrogenase (420 aa).

Positions 13, 14, 33, 85, and 126 each coordinate NAD(+). Residues R160, V161, K212, N216, R219, H250, R252, and G263 each contribute to the UDP-N-acetyl-alpha-D-mannosaminouronate site. The Proton donor/acceptor role is filled by K212. The active-site Nucleophile is C266. 2 residues coordinate UDP-N-acetyl-alpha-D-mannosaminouronate: F330 and K331. R338 serves as a coordination point for NAD(+). Residue K416 coordinates UDP-N-acetyl-alpha-D-mannosaminouronate.

It belongs to the UDP-glucose/GDP-mannose dehydrogenase family. WecC subfamily. Homodimer.

The enzyme catalyses UDP-N-acetyl-alpha-D-mannosamine + 2 NAD(+) + H2O = UDP-N-acetyl-alpha-D-mannosaminouronate + 2 NADH + 3 H(+). The protein operates within bacterial outer membrane biogenesis; enterobacterial common antigen biosynthesis. In terms of biological role, catalyzes the four-electron oxidation of UDP-N-acetyl-D-mannosamine (UDP-ManNAc), reducing NAD(+) and releasing UDP-N-acetylmannosaminuronic acid (UDP-ManNAcA). The polypeptide is UDP-N-acetyl-D-mannosamine dehydrogenase (Yersinia pestis).